A 101-amino-acid chain; its full sequence is NADH-quinone oxidoreductase subunit K (101 aa).

3 helical membrane-spanning segments follow: residues 4 to 24 (LSHYLILGAVLFAISVVGIFL), 30 to 50 (IVLLMAIELMLLAVNLNFIAF), and 61 to 81 (VFVFFILTVAAAESAIGLAIL).

This sequence belongs to the complex I subunit 4L family. In terms of assembly, NDH-1 is composed of 14 different subunits. Subunits NuoA, H, J, K, L, M, N constitute the membrane sector of the complex.

The protein resides in the cell inner membrane. The enzyme catalyses a quinone + NADH + 5 H(+)(in) = a quinol + NAD(+) + 4 H(+)(out). Functionally, NDH-1 shuttles electrons from NADH, via FMN and iron-sulfur (Fe-S) centers, to quinones in the respiratory chain. The immediate electron acceptor for the enzyme in this species is believed to be ubiquinone. Couples the redox reaction to proton translocation (for every two electrons transferred, four hydrogen ions are translocated across the cytoplasmic membrane), and thus conserves the redox energy in a proton gradient. The chain is NADH-quinone oxidoreductase subunit K from Azoarcus sp. (strain BH72).